The sequence spans 35 residues: Manganese peroxidase (35 aa).

Positions 1–11 (LSLLGHDERVT) are enriched in basic and acidic residues. The disordered stretch occupies residues 1-35 (LSLLGHDERVTPEPFDSVTAQNARGNQADVQSLPR). Positions 18-35 (VTAQNARGNQADVQSLPR) are enriched in polar residues.

The protein belongs to the peroxidase family. Requires heme b as cofactor. Ca(2+) serves as cofactor.

It catalyses the reaction 2 Mn(2+) + H2O2 + 2 H(+) = 2 Mn(3+) + 2 H2O. In terms of biological role, has manganese peroxidase activity. This chain is Manganese peroxidase, found in Irpex lacteus (Milk-white toothed polypore).